Reading from the N-terminus, the 130-residue chain is Small ribosomal subunit protein uS8 (130 aa).

Belongs to the universal ribosomal protein uS8 family. Part of the 30S ribosomal subunit. Contacts proteins S5 and S12.

One of the primary rRNA binding proteins, it binds directly to 16S rRNA central domain where it helps coordinate assembly of the platform of the 30S subunit. In Shewanella loihica (strain ATCC BAA-1088 / PV-4), this protein is Small ribosomal subunit protein uS8.